A 455-amino-acid chain; its full sequence is Major facilitator superfamily domain-containing protein 10 (455 aa).

11 consecutive transmembrane segments (helical) span residues 27–47 (VVFL…PLLP), 86–106 (VLFG…CAPL), 113–135 (CLGR…AVWA), 148–168 (LIGG…ADLG), 176–196 (GMAV…MLGA), 202–222 (MAPW…FCFL), 275–295 (LGLV…TLSF), 310–327 (KMFF…GAYA), 336–356 (VAAV…IGWG), 359–379 (LPVL…VVPC), and 421–441 (LAGA…PFFL).

Belongs to the major facilitator superfamily. In terms of tissue distribution, expressed in luminal membrane of renal tubules (at protein level). Detected in all tissues tested with higher expression in heart, splee, kidney, leukocytes and prostate.

It localises to the nucleus inner membrane. The protein localises to the cell membrane. Functionally, probable organic anion transporter which may serve as a transporter for some non-steroidal anti-inflammatory drugs (NSAIDs) as well as other organic anions across the luminal membranes of renal proximal tubules at the final excretion step into the urine. The protein is Major facilitator superfamily domain-containing protein 10 (MFSD10) of Homo sapiens (Human).